Reading from the N-terminus, the 117-residue chain is Large ribosomal subunit protein uL18 (117 aa).

Belongs to the universal ribosomal protein uL18 family. As to quaternary structure, part of the 50S ribosomal subunit; part of the 5S rRNA/L5/L18/L25 subcomplex. Contacts the 5S and 23S rRNAs.

In terms of biological role, this is one of the proteins that bind and probably mediate the attachment of the 5S RNA into the large ribosomal subunit, where it forms part of the central protuberance. The chain is Large ribosomal subunit protein uL18 from Colwellia psychrerythraea (strain 34H / ATCC BAA-681) (Vibrio psychroerythus).